Consider the following 414-residue polypeptide: MIEVLLVTICLAVFPYQGSSIILESGNVNDYEVVYPRKVTALPKGAVQPKYEDAMQYELKVNGEPVVLHLEKNKELFSKDYSETHYSPDGRKITTNPSVEDHCYYRGRIENDADSTASISACNGLKGHFKLQGEMYLIEPLVLSDSEAHAVFKLENVEKEDGGPKMCGVTQNWESYEPIKKASDLNFNSDQQRFAKRYVELVIVADHRMFMKYKSDLFSICSRVHDIVNFINWFYRSLNIRVSLTDLGIWSDQDYITVQSSAENTLHSFGEWGKSVLLKQKRHDNAQLLTAIVLDEDTLGLAYLSSMCNPWTSVEIIQDHSPINLLMGVTMAHELGHNLGMKHDEKDCLRGATLCIMRPGLTPGRSYEFSDDSMGYYQSFLDQYKPQCILNKPLRIDPVSTPVSGNELLEAGEE.

A signal peptide spans 1–20 (MIEVLLVTICLAVFPYQGSS). Residues 21–190 (IILESGNVND…KASDLNFNSD (170 aa)) constitute a propeptide that is removed on maturation. Pyrrolidone carboxylic acid is present on Gln-191. The Peptidase M12B domain occupies 197 to 393 (RYVELVIVAD…YKPQCILNKP (197 aa)). Residues Glu-200 and Asp-284 each coordinate Ca(2+). 2 disulfide bridges follow: Cys-308-Cys-388 and Cys-348-Cys-355. His-333 lines the Zn(2+) pocket. The active site involves Glu-334. Zn(2+) contacts are provided by His-337 and His-343. Ca(2+)-binding residues include Cys-388 and Asn-391. A propeptide spanning residues 394–414 (LRIDPVSTPVSGNELLEAGEE) is cleaved from the precursor.

This sequence belongs to the venom metalloproteinase (M12B) family. P-I subfamily. In terms of assembly, monomer. The cofactor is Zn(2+). As to expression, expressed by the venom gland.

It localises to the secreted. Snake venom metalloproteinase that impairs hemostasis in the envenomed animal. The protein is Snake venom metalloproteinase of Crotalus molossus molossus (Northern black-tailed rattlesnake).